A 276-amino-acid chain; its full sequence is Bis(5'-nucleosyl)-tetraphosphatase, symmetrical (276 aa).

Belongs to the Ap4A hydrolase family.

The catalysed reaction is P(1),P(4)-bis(5'-adenosyl) tetraphosphate + H2O = 2 ADP + 2 H(+). Functionally, hydrolyzes diadenosine 5',5'''-P1,P4-tetraphosphate to yield ADP. This Legionella pneumophila (strain Lens) protein is Bis(5'-nucleosyl)-tetraphosphatase, symmetrical.